Reading from the N-terminus, the 329-residue chain is Prostaglandin reductase 1 (329 aa).

Residue Thr-18 is modified to Phosphothreonine. NADP(+) is bound by residues 152–155, Lys-178, Tyr-193, Asn-217, 239–245, 270–272, and Asn-321; these read GAVG, CGAISQY, and FIV. N6-(2-hydroxyisobutyryl)lysine; alternate is present on Lys-178. An N6-acetyllysine; alternate modification is found at Lys-178.

It belongs to the NADP-dependent oxidoreductase L4BD family. As to quaternary structure, monomer or homodimer.

The protein localises to the cytoplasm. The catalysed reaction is 13,14-dihydro-15-oxo-prostaglandin E1 + NADP(+) = 15-oxoprostaglandin E1 + NADPH + H(+). The enzyme catalyses 13,14-dihydro-15-oxo-prostaglandin E2 + NADP(+) = 15-oxoprostaglandin E2 + NADPH + H(+). It catalyses the reaction 13,14-dihydro-15-oxo-prostaglandin F1alpha + NADP(+) = 15-oxoprostaglandin F1alpha + NADPH + H(+). It carries out the reaction 13,14-dihydro-15-oxo-PGF2alpha + NADP(+) = 15-oxoprostaglandin F2alpha + NADPH + H(+). The catalysed reaction is leukotriene B4 + NADP(+) = 12-oxo-leukotriene B4 + NADPH + H(+). The enzyme catalyses 20-hydroxy-leukotriene B4 + NADP(+) = 12-oxo-20-hydroxy-leukotriene B4 + NADPH + H(+). It catalyses the reaction 6-trans-leukotriene B4 + NADP(+) = 12-oxo-(5S)-hydroxy-(6E,8E,10E,14Z)-eicosatetraenoate + NADPH + H(+). It carries out the reaction (5S,12S)-dihydroxy-(6E,10E,12E,14Z)-eicosatetraenoate + NADP(+) = 12-oxo-(5S)-hydroxy-(6E,8E,10E,14Z)-eicosatetraenoate + NADPH + H(+). The catalysed reaction is an n-alkanal + NADP(+) = an alk-2-enal + NADPH + H(+). The enzyme catalyses hexanal + NADP(+) = (E)-hex-2-enal + NADPH + H(+). It catalyses the reaction octanal + NADP(+) = (2E)-octenal + NADPH + H(+). It carries out the reaction decanal + NADP(+) = (2E)-decenal + NADPH + H(+). The catalysed reaction is dodecanal + NADP(+) = (2E)-dodecenal + NADPH + H(+). The enzyme catalyses 4-hydroxynonanal + NADP(+) = (E)-4-hydroxynon-2-enal + NADPH + H(+). It catalyses the reaction pentan-2-one + NADP(+) = (E)-pent-3-en-2-one + NADPH + H(+). It carries out the reaction nonan-2-one + NADP(+) = (3E)-nonen-2-one + NADPH + H(+). In terms of biological role, NAD(P)H-dependent oxidoreductase involved in metabolic inactivation of pro- and anti-inflammatory eicosanoids: prostaglandins (PG), leukotrienes (LT) and lipoxins (LX). Catalyzes with high efficiency the reduction of the 13,14 double bond of 15-oxoPGs, including 15-oxo-PGE1, 15-oxo-PGE2, 15-oxo-PGF1-alpha and 15-oxo-PGF2-alpha. Catalyzes with lower efficiency the oxidation of the hydroxyl group at C12 of LTB4 and its derivatives, converting them into biologically less active 12-oxo-LTB4 metabolites. Reduces 15-oxo-LXA4 to 13,14 dihydro-15-oxo-LXA4, enhancing neutrophil recruitment at the inflammatory site. Plays a role in metabolic detoxification of alkenals and ketones. Reduces alpha,beta-unsaturated alkenals and ketones, particularly those with medium-chain length, showing highest affinity toward (2E)-decenal and (3E)-3-nonen-2-one. May inactivate 4-hydroxy-2-nonenal, a cytotoxic lipid constituent of oxidized low-density lipoprotein particles. The polypeptide is Prostaglandin reductase 1 (Ptgr1) (Mus musculus (Mouse)).